Consider the following 191-residue polypeptide: Glutathione-dependent formaldehyde-activating enzyme (191 aa).

Residues 22–169 enclose the CENP-V/GFA domain; the sequence is FAGGTLQCLC…LTELGLTPYD (148 aa). The Zn(2+) site is built by C29, C31, C50, C52, C55, C97, and C100.

Belongs to the Gfa family. Requires Zn(2+) as cofactor.

It catalyses the reaction S-(hydroxymethyl)glutathione = glutathione + formaldehyde. It participates in one-carbon metabolism; formaldehyde degradation; formate from formaldehyde (glutathione route): step 1/3. Functionally, catalyzes the condensation of formaldehyde and glutathione to S-hydroxymethylglutathione. The sequence is that of Glutathione-dependent formaldehyde-activating enzyme from Xanthomonas campestris pv. campestris (strain 8004).